The chain runs to 142 residues: Sec-independent protein translocase protein TatB (142 aa).

Residues 2–22 traverse the membrane as a helical segment; the sequence is FANVGWGEMLVLVIAGLVILG. Positions 89-142 are disordered; it reads DDSIFTGKFDQNGKSEKPEQKPEKPQSAPGPAAAVPDQPAGGRSGSTPYDTDAT. Positions 99 to 112 are enriched in basic and acidic residues; it reads QNGKSEKPEQKPEK. The segment covering 133–142 has biased composition (polar residues); the sequence is GSTPYDTDAT.

It belongs to the TatB family. In terms of assembly, the Tat system comprises two distinct complexes: a TatABC complex, containing multiple copies of TatA, TatB and TatC subunits, and a separate TatA complex, containing only TatA subunits. Substrates initially bind to the TatABC complex, which probably triggers association of the separate TatA complex to form the active translocon.

Its subcellular location is the cell membrane. Functionally, part of the twin-arginine translocation (Tat) system that transports large folded proteins containing a characteristic twin-arginine motif in their signal peptide across membranes. Together with TatC, TatB is part of a receptor directly interacting with Tat signal peptides. TatB may form an oligomeric binding site that transiently accommodates folded Tat precursor proteins before their translocation. This chain is Sec-independent protein translocase protein TatB, found in Mycolicibacterium vanbaalenii (strain DSM 7251 / JCM 13017 / BCRC 16820 / KCTC 9966 / NRRL B-24157 / PYR-1) (Mycobacterium vanbaalenii).